The primary structure comprises 242 residues: 7-cyano-7-deazaguanine synthase (242 aa).

12–22 serves as a coordination point for ATP; sequence FSGGQDSATCL. 4 residues coordinate Zn(2+): Cys-200, Cys-215, Cys-218, and Cys-221.

Belongs to the QueC family. Zn(2+) serves as cofactor.

The catalysed reaction is 7-carboxy-7-deazaguanine + NH4(+) + ATP = 7-cyano-7-deazaguanine + ADP + phosphate + H2O + H(+). Its pathway is purine metabolism; 7-cyano-7-deazaguanine biosynthesis. Functionally, catalyzes the ATP-dependent conversion of 7-carboxy-7-deazaguanine (CDG) to 7-cyano-7-deazaguanine (preQ(0)). This Gluconobacter oxydans (strain 621H) (Gluconobacter suboxydans) protein is 7-cyano-7-deazaguanine synthase.